The sequence spans 361 residues: Protein-L-isoaspartate O-methyltransferase domain-containing protein 2 (361 aa).

The N-myristoyl glycine moiety is linked to residue Gly2. Ser64 is a catalytic residue. 3 adoMet binding motif regions span residues 85 to 94, 160 to 164, and 181 to 191; these read LNLGSGTGYL, YDRVY, and LKVGGILVMPL. The interval 240–250 is BC-box; it reads VRSLQDLARIA. The disordered stretch occupies residues 303–336; that stretch reads SNPSDDNSCEDLEEERREEEEKTPPETKPDPPVN. Residues 309 to 320 are compositionally biased toward acidic residues; sequence NSCEDLEEERRE. The span at 321 to 331 shows a compositional bias: basic and acidic residues; it reads EEEKTPPETKP. The tract at residues 345–348 is CUL-box; sequence LPLP.

Belongs to the methyltransferase superfamily. L-isoaspartyl/D-aspartyl protein methyltransferase family.

Its subcellular location is the cytoplasm. Functionally, may act as a substrate recognition component of an ECS (Elongin BC-CUL5-SOCS-box protein) E3 ubiquitin ligase complex which mediates the ubiquitination and subsequent proteasomal degradation of target proteins. May bind to the methyltransferase cofactor S-adenosylmethionine (AdoMet) via the N-terminal AdoMet binding motif, but probably does not display methyltransferase activity. The chain is Protein-L-isoaspartate O-methyltransferase domain-containing protein 2 (PCMTD2) from Homo sapiens (Human).